The chain runs to 605 residues: Poly [ADP-ribose] polymerase 2-B (605 aa).

A disordered region spans residues 96–122; the sequence is NAAAAAAVTDGGDQDKTKSAKDDDGDD. Basic and acidic residues predominate over residues 108 to 122; it reads DQDKTKSAKDDDGDD. In terms of domain architecture, WGR spans 153–260; that stretch reads AYHVLQVGDE…TKLETRTASF (108 aa). In terms of domain architecture, PARP alpha-helical spans 250–370; the sequence is ETKLETRTAS…EIEIAIKLLE (121 aa). In terms of domain architecture, PARP catalytic spans 378–605; it reads HPLYARYKQF…NVNFNFKRWG (228 aa).

This sequence belongs to the ARTD/PARP family.

Its subcellular location is the nucleus. It catalyses the reaction NAD(+) + (ADP-D-ribosyl)n-acceptor = nicotinamide + (ADP-D-ribosyl)n+1-acceptor + H(+).. The catalysed reaction is L-aspartyl-[protein] + NAD(+) = 4-O-(ADP-D-ribosyl)-L-aspartyl-[protein] + nicotinamide. It carries out the reaction L-glutamyl-[protein] + NAD(+) = 5-O-(ADP-D-ribosyl)-L-glutamyl-[protein] + nicotinamide. Involved in the base excision repair (BER) pathway, by catalyzing the poly(ADP-ribosyl)ation of a limited number of acceptor proteins involved in chromatin architecture and in DNA metabolism. This modification follows DNA damages and appears as an obligatory step in a detection/signaling pathway leading to the reparation of DNA strand breaks. This is Poly [ADP-ribose] polymerase 2-B (PARP2-B) from Oryza sativa subsp. japonica (Rice).